The following is a 302-amino-acid chain: ATP synthase gamma chain (302 aa).

This sequence belongs to the ATPase gamma chain family. As to quaternary structure, F-type ATPases have 2 components, CF(1) - the catalytic core - and CF(0) - the membrane proton channel. CF(1) has five subunits: alpha(3), beta(3), gamma(1), delta(1), epsilon(1). CF(0) has three main subunits: a, b and c.

The protein localises to the cell inner membrane. Its function is as follows. Produces ATP from ADP in the presence of a proton gradient across the membrane. The gamma chain is believed to be important in regulating ATPase activity and the flow of protons through the CF(0) complex. In Bartonella bacilliformis (strain ATCC 35685 / KC583 / Herrer 020/F12,63), this protein is ATP synthase gamma chain.